We begin with the raw amino-acid sequence, 364 residues long: Autophagy-related protein 14 (364 aa).

The tract at residues 5-20 (CPICETQSHVFYCAHC) is cysteine repeats. Residues 38-114 (LGKINNALRN…QDRRIKEKSR (77 aa)) are a coiled coil.

It belongs to the ATG14 family. Component of the autophagy-specific VPS34 PI3-kinase complex I composed of VPS15, VPS30, VPS34, ATG14 and ATG38. Interacts directly with ATG38.

It localises to the preautophagosomal structure membrane. The protein resides in the vacuole membrane. In terms of biological role, required for cytoplasm to vacuole transport (Cvt) and autophagy as a part of the autophagy-specific VPS34 PI3-kinase complex I. This complex is essential to recruit the ATG8-phosphatidylinositol conjugate and the ATG12-ATG5 conjugate to the pre-autophagosomal structure. ATG14 mediates the specific binding of the VPS34 PI3-kinase complex I to the preautophagosomal structure (PAS). Required for survival and/or proliferation in kidneys and in brain. In Candida glabrata (strain ATCC 2001 / BCRC 20586 / JCM 3761 / NBRC 0622 / NRRL Y-65 / CBS 138) (Yeast), this protein is Autophagy-related protein 14.